The sequence spans 239 residues: Uridylate kinase (239 aa).

Position 12–15 (12–15 (KLSG)) interacts with ATP. The interval 20–25 (GEKGFG) is involved in allosteric activation by GTP. G54 is a binding site for UMP. G55 and R59 together coordinate ATP. UMP contacts are provided by residues D72 and 133–140 (TGNPFFST). ATP is bound by residues Y166 and D169.

Belongs to the UMP kinase family. Homohexamer.

It is found in the cytoplasm. The enzyme catalyses UMP + ATP = UDP + ADP. It participates in pyrimidine metabolism; CTP biosynthesis via de novo pathway; UDP from UMP (UMPK route): step 1/1. Its activity is regulated as follows. Allosterically activated by GTP. Inhibited by UTP. In terms of biological role, catalyzes the reversible phosphorylation of UMP to UDP. In Caldicellulosiruptor saccharolyticus (strain ATCC 43494 / DSM 8903 / Tp8T 6331), this protein is Uridylate kinase.